The following is a 92-amino-acid chain: Signal peptidase complex subunit 1 (92 aa).

The Cytoplasmic segment spans residues 1-12; the sequence is MDWQGQKLVEQL. The helical transmembrane segment at 13–30 threads the bilayer; sequence MQILLVISGVVAVVVGYT. The Lumenal segment spans residues 31 to 36; it reads TESFRT. A helical membrane pass occupies residues 37–59; sequence MMLIYAGGVVLTTLVTVPNWPFY. Over 60 to 92 the chain is Cytoplasmic; the sequence is NLHPLKWLDPSEAEKHPKPEVVSVASKKKFSKK. The disordered stretch occupies residues 73–92; that stretch reads EKHPKPEVVSVASKKKFSKK.

The protein belongs to the SPCS1 family. As to quaternary structure, component of the signal peptidase complex (SPC) composed of a catalytic subunit SEC11 and three accessory subunits SPCS1, SPCS2 and SPCS3. The complex induces a local thinning of the ER membrane which is used to measure the length of the signal peptide (SP) h-region of protein substrates. This ensures the selectivity of the complex towards h-regions shorter than 18-20 amino acids.

It is found in the endoplasmic reticulum membrane. Functionally, component of the signal peptidase complex (SPC) which catalyzes the cleavage of N-terminal signal sequences from nascent proteins as they are translocated into the lumen of the endoplasmic reticulum. Dispensable for SPC enzymatic activity. The polypeptide is Signal peptidase complex subunit 1 (Arabidopsis thaliana (Mouse-ear cress)).